A 301-amino-acid chain; its full sequence is Glycine--tRNA ligase alpha subunit (301 aa).

It belongs to the class-II aminoacyl-tRNA synthetase family. In terms of assembly, tetramer of two alpha and two beta subunits.

Its subcellular location is the cytoplasm. The enzyme catalyses tRNA(Gly) + glycine + ATP = glycyl-tRNA(Gly) + AMP + diphosphate. The sequence is that of Glycine--tRNA ligase alpha subunit from Shewanella loihica (strain ATCC BAA-1088 / PV-4).